Consider the following 96-residue polypeptide: Plasminogen-like protein A (96 aa).

Positions 1–19 (MEHKEVVLLLLLFLKSGQG) are cleaved as a signal peptide. Residues 20-96 (EPLDDYVNAQ…RMRDVVLFEK (77 aa)) enclose the PAN domain. Cystine bridges form between cysteine 49–cysteine 73 and cysteine 53–cysteine 61.

In terms of tissue distribution, expressed in liver.

Its subcellular location is the secreted. May bind non-covalently to lysine binding sites present in the kringle structures of plasminogen. This may interfere with the binding of fibrin or alpha-2-antiplasmin to plasminogen and may result in the localization of activity at sites necessary for extracellular matrix destruction. This Homo sapiens (Human) protein is Plasminogen-like protein A (PLGLA).